The primary structure comprises 234 residues: Ubiquinone biosynthesis O-methyltransferase (234 aa).

S-adenosyl-L-methionine-binding residues include Arg-39, Gly-59, Asp-80, and Met-124.

This sequence belongs to the methyltransferase superfamily. UbiG/COQ3 family.

It carries out the reaction a 3-demethylubiquinol + S-adenosyl-L-methionine = a ubiquinol + S-adenosyl-L-homocysteine + H(+). The enzyme catalyses a 3-(all-trans-polyprenyl)benzene-1,2-diol + S-adenosyl-L-methionine = a 2-methoxy-6-(all-trans-polyprenyl)phenol + S-adenosyl-L-homocysteine + H(+). The protein operates within cofactor biosynthesis; ubiquinone biosynthesis. In terms of biological role, O-methyltransferase that catalyzes the 2 O-methylation steps in the ubiquinone biosynthetic pathway. This is Ubiquinone biosynthesis O-methyltransferase from Aliivibrio fischeri (strain MJ11) (Vibrio fischeri).